The primary structure comprises 129 residues: Glycine cleavage system H protein (129 aa).

The 83-residue stretch at 24–106 folds into the Lipoyl-binding domain; the sequence is SYTVGITEHA…YGEGWFFRVM (83 aa). The residue at position 65 (Lys-65) is an N6-lipoyllysine.

The protein belongs to the GcvH family. The glycine cleavage system is composed of four proteins: P, T, L and H. The cofactor is (R)-lipoate.

The glycine cleavage system catalyzes the degradation of glycine. The H protein shuttles the methylamine group of glycine from the P protein to the T protein. In Shewanella sp. (strain MR-7), this protein is Glycine cleavage system H protein.